A 126-amino-acid chain; its full sequence is UPF0235 protein C15orf40 homolog (126 aa).

Residues 1–33 (MPKKAGATSKGKNQTKEPETPPPPTGPVATDSK) form a disordered region. Ser-89 is subject to Phosphoserine.

The protein belongs to the UPF0235 family.

This Rattus norvegicus (Rat) protein is UPF0235 protein C15orf40 homolog.